A 332-amino-acid chain; its full sequence is Glyceraldehyde-3-phosphate dehydrogenase 2 (332 aa).

NAD(+) contacts are provided by residues 11 to 12 (RI), D32, and R77. D-glyceraldehyde 3-phosphate is bound by residues 148-150 (SCT), T179, 208-209 (TG), and R231. Catalysis depends on C149, which acts as the Nucleophile. Y273 bears the Phosphotyrosine mark. Residue T274 is modified to Phosphothreonine. An NAD(+)-binding site is contributed by N313.

It belongs to the glyceraldehyde-3-phosphate dehydrogenase family. As to quaternary structure, homotetramer.

The protein localises to the cytoplasm. It catalyses the reaction D-glyceraldehyde 3-phosphate + phosphate + NAD(+) = (2R)-3-phospho-glyceroyl phosphate + NADH + H(+). It participates in carbohydrate degradation; glycolysis; pyruvate from D-glyceraldehyde 3-phosphate: step 1/5. The polypeptide is Glyceraldehyde-3-phosphate dehydrogenase 2 (Gapdh2) (Drosophila melanogaster (Fruit fly)).